Here is a 457-residue protein sequence, read N- to C-terminus: Prenyltransferase ucdE (457 aa).

Positions 106, 198, 277, 279, 382, 447, and 451 each coordinate dimethylallyl diphosphate.

The protein belongs to the tryptophan dimethylallyltransferase family.

It functions in the pathway secondary metabolite biosynthesis. Its function is as follows. Nonribosomal peptide synthetase that mediates the biosynthesis of usterphenyllins and uscandidusins, p-terphenyl derivatives. Within the pathway, ucdE prenylates position C-5 of ring A of 3,15-dihydroxyterphenyllin to produce forms usterphenyllin B. UcdE further prenylates position C-14 of ring C of usterphenyllin B to form usterphenyllin A. The pathway begin with the biosynthesis of 4-hydroxyphenylpyruvate (HPPA) from L-tyrosine, possibly by the aminotransferase ucdG. The nonribosomal peptide synthetase ucdA then condenses two HPPA units to produce atromentin. The key step in this pathway is the reduction and dehydration of atromentin to form a terphenyl triol intermediate, performed by the NAD-dependent dehydrogenase ucdB. Further O-methylation by the methyltransferase ucdC forms terphenyllin carrying two methoxy moieties at C-9 and C-12, and subsequent dihydroxylation at C-3 of ring A and C-15 of ring C by the flavin-dependent oxygenase ucdD leads to 3,15-dihydroxyterphenyllin. Prenylation by ucdE at position C-5 of ring A forms usterphenyllin B, and is followed by a second prenylation at position C-14 of ring C to form usterphenyllin A. The following furan ring formation that leads to uscandidusins A and B was proven to be an unexpected spontaneous non-enzymatic reaction. This chain is Prenyltransferase ucdE, found in Aspergillus ustus.